The chain runs to 214 residues: Nicotinamidase (214 aa).

The active-site Proton acceptor is D18. Residues D56, H58, H62, and H91 each coordinate a divalent metal cation. The active site involves K116. The active-site Nucleophile is the C161.

The protein belongs to the isochorismatase family. A divalent metal cation serves as cofactor.

It carries out the reaction nicotinamide + H2O = nicotinate + NH4(+). The protein operates within cofactor biosynthesis; nicotinate biosynthesis; nicotinate from nicotinamide: step 1/1. In terms of biological role, catalyzes the deamidation of nicotinamide (NAM) into nicotinate (Na). Functions in the deamidating salvage pathway for production of NAD from nicotinamide. The protein is Nicotinamidase of Acinetobacter baylyi (strain ATCC 33305 / BD413 / ADP1).